The primary structure comprises 1062 residues: Carbamoyl phosphate synthase large chain (1062 aa).

The interval 1–401 (MPKRKDIHKI…AMQKAVRSLE (401 aa)) is carboxyphosphate synthetic domain. Residues Arg-129, Arg-169, Gly-175, Gly-176, Lys-208, Ile-210, Glu-215, Gly-241, Ile-242, His-243, Gln-284, and Glu-298 each contribute to the ATP site. An ATP-grasp 1 domain is found at 133–327 (KNLCKELGEP…IAKMAAKIAV (195 aa)). 3 residues coordinate Mg(2+): Gln-284, Glu-298, and Asn-300. Residues Gln-284, Glu-298, and Asn-300 each contribute to the Mn(2+) site. The interval 402–546 (IDEKDLYSEE…YSTYDAENES (145 aa)) is oligomerization domain. The segment at 547-929 (HRSGKKSVIV…ALYKAFAGAK (383 aa)) is carbamoyl phosphate synthetic domain. The 191-residue stretch at 671–861 (DDIIKELKLN…MAQVATRVIM (191 aa)) folds into the ATP-grasp 2 domain. Positions 707, 746, 748, 752, 777, 778, 779, 780, 820, and 832 each coordinate ATP. Residues Gln-820, Glu-832, and Asn-834 each contribute to the Mg(2+) site. 3 residues coordinate Mn(2+): Gln-820, Glu-832, and Asn-834. Residues 930 to 1062 (MQLPENGNVL…NRSFATDALQ (133 aa)) form the MGS-like domain. An allosteric domain region spans residues 930-1062 (MQLPENGNVL…NRSFATDALQ (133 aa)).

Belongs to the CarB family. In terms of assembly, composed of two chains; the small (or glutamine) chain promotes the hydrolysis of glutamine to ammonia, which is used by the large (or ammonia) chain to synthesize carbamoyl phosphate. Tetramer of heterodimers (alpha,beta)4. Requires Mg(2+) as cofactor. Mn(2+) is required as a cofactor.

It catalyses the reaction hydrogencarbonate + L-glutamine + 2 ATP + H2O = carbamoyl phosphate + L-glutamate + 2 ADP + phosphate + 2 H(+). The catalysed reaction is hydrogencarbonate + NH4(+) + 2 ATP = carbamoyl phosphate + 2 ADP + phosphate + 2 H(+). The protein operates within amino-acid biosynthesis; L-arginine biosynthesis; carbamoyl phosphate from bicarbonate: step 1/1. Its pathway is pyrimidine metabolism; UMP biosynthesis via de novo pathway; (S)-dihydroorotate from bicarbonate: step 1/3. In terms of biological role, large subunit of the glutamine-dependent carbamoyl phosphate synthetase (CPSase). CPSase catalyzes the formation of carbamoyl phosphate from the ammonia moiety of glutamine, carbonate, and phosphate donated by ATP, constituting the first step of 2 biosynthetic pathways, one leading to arginine and/or urea and the other to pyrimidine nucleotides. The large subunit (synthetase) binds the substrates ammonia (free or transferred from glutamine from the small subunit), hydrogencarbonate and ATP and carries out an ATP-coupled ligase reaction, activating hydrogencarbonate by forming carboxy phosphate which reacts with ammonia to form carbamoyl phosphate. In Lactobacillus acidophilus (strain ATCC 700396 / NCK56 / N2 / NCFM), this protein is Carbamoyl phosphate synthase large chain.